A 517-amino-acid polypeptide reads, in one-letter code: Crotonobetaine/carnitine--CoA ligase (517 aa).

Belongs to the ATP-dependent AMP-binding enzyme family.

It carries out the reaction 4-(trimethylamino)butanoate + ATP + CoA = 4-(trimethylamino)butanoyl-CoA + AMP + diphosphate. It catalyses the reaction crotonobetaine + ATP + CoA = crotonobetainyl-CoA + AMP + diphosphate. The catalysed reaction is (R)-carnitine + ATP + CoA = (R)-carnitinyl-CoA + AMP + diphosphate. Its pathway is amine and polyamine metabolism; carnitine metabolism. Catalyzes the transfer of CoA to carnitine, generating the initial carnitinyl-CoA needed for the CaiB reaction cycle. Also has activity toward crotonobetaine and gamma-butyrobetaine. This is Crotonobetaine/carnitine--CoA ligase from Salmonella heidelberg (strain SL476).